The following is a 378-amino-acid chain: Dual-specificity RNA methyltransferase RlmN (378 aa).

Catalysis depends on Glu95, which acts as the Proton acceptor. The Radical SAM core domain occupies 101–345; it reads EETRGTLCVS…TTIRKTRGDD (245 aa). Cys108 and Cys350 are joined by a disulfide. [4Fe-4S] cluster contacts are provided by Cys115, Cys119, and Cys122. Residues 176–177, Ser208, 230–232, and Asn307 contribute to the S-adenosyl-L-methionine site; these read GE and SLH. Cys350 acts as the S-methylcysteine intermediate in catalysis.

This sequence belongs to the radical SAM superfamily. RlmN family. It depends on [4Fe-4S] cluster as a cofactor.

Its subcellular location is the cytoplasm. The catalysed reaction is adenosine(2503) in 23S rRNA + 2 reduced [2Fe-2S]-[ferredoxin] + 2 S-adenosyl-L-methionine = 2-methyladenosine(2503) in 23S rRNA + 5'-deoxyadenosine + L-methionine + 2 oxidized [2Fe-2S]-[ferredoxin] + S-adenosyl-L-homocysteine. It carries out the reaction adenosine(37) in tRNA + 2 reduced [2Fe-2S]-[ferredoxin] + 2 S-adenosyl-L-methionine = 2-methyladenosine(37) in tRNA + 5'-deoxyadenosine + L-methionine + 2 oxidized [2Fe-2S]-[ferredoxin] + S-adenosyl-L-homocysteine. Its function is as follows. Specifically methylates position 2 of adenine 2503 in 23S rRNA and position 2 of adenine 37 in tRNAs. m2A2503 modification seems to play a crucial role in the proofreading step occurring at the peptidyl transferase center and thus would serve to optimize ribosomal fidelity. In Burkholderia thailandensis (strain ATCC 700388 / DSM 13276 / CCUG 48851 / CIP 106301 / E264), this protein is Dual-specificity RNA methyltransferase RlmN.